The chain runs to 372 residues: Aminomethyltransferase (372 aa).

It belongs to the GcvT family. In terms of assembly, the glycine cleavage system is composed of four proteins: P, T, L and H.

The catalysed reaction is N(6)-[(R)-S(8)-aminomethyldihydrolipoyl]-L-lysyl-[protein] + (6S)-5,6,7,8-tetrahydrofolate = N(6)-[(R)-dihydrolipoyl]-L-lysyl-[protein] + (6R)-5,10-methylene-5,6,7,8-tetrahydrofolate + NH4(+). The glycine cleavage system catalyzes the degradation of glycine. This is Aminomethyltransferase from Streptomyces coelicolor (strain ATCC BAA-471 / A3(2) / M145).